We begin with the raw amino-acid sequence, 420 residues long: Tyrosine--tRNA ligase (420 aa).

Tyrosine 33 is a binding site for L-tyrosine. Residues 38-47 (PTADSLHIGH) carry the 'HIGH' region motif. L-tyrosine-binding residues include tyrosine 168 and glutamine 172. A 'KMSKS' region motif is present at residues 231 to 235 (KFGKT). Residue lysine 234 participates in ATP binding. The region spanning 353-419 (MLLVDALIKV…GKKNYYLVKL (67 aa)) is the S4 RNA-binding domain.

It belongs to the class-I aminoacyl-tRNA synthetase family. TyrS type 1 subfamily. Homodimer.

It is found in the cytoplasm. The enzyme catalyses tRNA(Tyr) + L-tyrosine + ATP = L-tyrosyl-tRNA(Tyr) + AMP + diphosphate + H(+). Functionally, catalyzes the attachment of tyrosine to tRNA(Tyr) in a two-step reaction: tyrosine is first activated by ATP to form Tyr-AMP and then transferred to the acceptor end of tRNA(Tyr). This Desulfitobacterium hafniense (strain Y51) protein is Tyrosine--tRNA ligase.